A 195-amino-acid polypeptide reads, in one-letter code: HTH-type transcriptional regulator BetI (195 aa).

The 61-residue stretch at 8 to 68 folds into the HTH tetR-type domain; that stretch reads EIRRAQLIDA…ATMRHVLRDL (61 aa). The segment at residues 31 to 50 is a DNA-binding region (H-T-H motif); it reads TLASVAQRANISTGIVSHYF.

It participates in amine and polyamine biosynthesis; betaine biosynthesis via choline pathway [regulation]. Repressor involved in the biosynthesis of the osmoprotectant glycine betaine. It represses transcription of the choline transporter BetT and the genes of BetAB involved in the synthesis of glycine betaine. The polypeptide is HTH-type transcriptional regulator BetI (Burkholderia mallei (strain NCTC 10247)).